The primary structure comprises 397 residues: Dimethyladenosine transferase 2, mitochondrial (397 aa).

Residues 1–44 (MRGLAMRLPPRLALSVLAGRGPSCILGSGAATRKDWQERNRRSF) constitute a mitochondrion transit peptide. The S-adenosyl-L-methionine site is built by I75, E124, and D150. The segment at 329–330 (KR) is DNA-binding.

Belongs to the class I-like SAM-binding methyltransferase superfamily. rRNA adenine N(6)-methyltransferase family. KsgA subfamily. As to quaternary structure, homodimer. Component of the mitochondrial transcription initiation complex, composed at least of TFB2M, TFAM and POLRMT. In this complex TFAM recruits POLRMT to the promoter whereas TFB2M induces structural changes in POLRMT to enable promoter opening and trapping of the DNA non-template strand. Interacts with mitochondrial RNA polymerase POLRMT. Interacts with TFAM.

The protein localises to the mitochondrion. The catalysed reaction is adenosine in rRNA + S-adenosyl-L-methionine = N(6)-methyladenosine in rRNA + S-adenosyl-L-homocysteine + H(+). In terms of biological role, S-adenosyl-L-methionine-dependent rRNA methyltransferase which may methylate two specific adjacent adenosines in the loop of a conserved hairpin near the 3'-end of 12S mitochondrial rRNA. Component of the mitochondrial transcription initiation complex, composed at least of TFB2M, TFAM and POLRMT that is required for basal transcription of mitochondrial DNA. In this complex TFAM recruits POLRMT to a specific promoter whereas TFB2M induces structural changes in POLRMT to enable promoter opening and trapping of the DNA non-template strand. Stimulates transcription independently of the methyltransferase activity. The chain is Dimethyladenosine transferase 2, mitochondrial from Rattus norvegicus (Rat).